A 98-amino-acid chain; its full sequence is NADH-ubiquinone oxidoreductase chain 4L (98 aa).

3 helical membrane-spanning segments follow: residues 1 to 21, 29 to 49, and 61 to 81; these read MSMV…GLLM, SLLC…VTIL, and IILL…LVMV.

Belongs to the complex I subunit 4L family. In terms of assembly, core subunit of respiratory chain NADH dehydrogenase (Complex I) which is composed of 45 different subunits.

The protein localises to the mitochondrion inner membrane. The enzyme catalyses a ubiquinone + NADH + 5 H(+)(in) = a ubiquinol + NAD(+) + 4 H(+)(out). Functionally, core subunit of the mitochondrial membrane respiratory chain NADH dehydrogenase (Complex I) which catalyzes electron transfer from NADH through the respiratory chain, using ubiquinone as an electron acceptor. Part of the enzyme membrane arm which is embedded in the lipid bilayer and involved in proton translocation. In Pusa hispida (Ringed seal), this protein is NADH-ubiquinone oxidoreductase chain 4L (MT-ND4L).